The sequence spans 1058 residues: Carbamoyl phosphate synthase large chain (1058 aa).

A carboxyphosphate synthetic domain region spans residues 1 to 401 (MSKRKDIQKI…SLLKACRSLE (401 aa)). ATP is bound by residues Arg129, Arg169, Gly175, Gly176, Arg208, Ile210, Glu215, Gly241, Ile242, His243, Gln284, and Glu298. One can recognise an ATP-grasp 1 domain in the interval 133 to 327 (KQLMQELDQP…IAKLAAKIAV (195 aa)). Mg(2+) contacts are provided by Gln284, Glu298, and Asn300. Mn(2+) is bound by residues Gln284, Glu298, and Asn300. The oligomerization domain stretch occupies residues 402–546 (IGVCHNEMTS…YSTYELENES (145 aa)). Residues 547-929 (VQSNKESILV…ALYKAFEANN (383 aa)) form a carbamoyl phosphate synthetic domain region. The ATP-grasp 2 domain occupies 671-861 (EKALKELGIP…MAQIATKLIL (191 aa)). ATP-binding residues include Arg707, Ser746, Ile748, Glu752, Gly777, Val778, His779, Ser780, Gln820, and Glu832. 3 residues coordinate Mg(2+): Gln820, Glu832, and Asn834. Positions 820, 832, and 834 each coordinate Mn(2+). The MGS-like domain occupies 930–1058 (SHLSEFGQIV…ESRCFNIEAI (129 aa)). An allosteric domain region spans residues 930–1058 (SHLSEFGQIV…ESRCFNIEAI (129 aa)).

This sequence belongs to the CarB family. Composed of two chains; the small (or glutamine) chain promotes the hydrolysis of glutamine to ammonia, which is used by the large (or ammonia) chain to synthesize carbamoyl phosphate. Tetramer of heterodimers (alpha,beta)4. Requires Mg(2+) as cofactor. Mn(2+) serves as cofactor.

The catalysed reaction is hydrogencarbonate + L-glutamine + 2 ATP + H2O = carbamoyl phosphate + L-glutamate + 2 ADP + phosphate + 2 H(+). It catalyses the reaction hydrogencarbonate + NH4(+) + 2 ATP = carbamoyl phosphate + 2 ADP + phosphate + 2 H(+). The protein operates within amino-acid biosynthesis; L-arginine biosynthesis; carbamoyl phosphate from bicarbonate: step 1/1. It functions in the pathway pyrimidine metabolism; UMP biosynthesis via de novo pathway; (S)-dihydroorotate from bicarbonate: step 1/3. Functionally, large subunit of the glutamine-dependent carbamoyl phosphate synthetase (CPSase). CPSase catalyzes the formation of carbamoyl phosphate from the ammonia moiety of glutamine, carbonate, and phosphate donated by ATP, constituting the first step of 2 biosynthetic pathways, one leading to arginine and/or urea and the other to pyrimidine nucleotides. The large subunit (synthetase) binds the substrates ammonia (free or transferred from glutamine from the small subunit), hydrogencarbonate and ATP and carries out an ATP-coupled ligase reaction, activating hydrogencarbonate by forming carboxy phosphate which reacts with ammonia to form carbamoyl phosphate. This chain is Carbamoyl phosphate synthase large chain, found in Streptococcus pyogenes serotype M5 (strain Manfredo).